A 421-amino-acid chain; its full sequence is tRNA (guanine-N(7)-)-methyltransferase non-catalytic subunit TRM82 (421 aa).

3 WD repeats span residues 72-112, 170-212, and 216-258; these read AVYS…EDPE, GHVS…IVDK, and GHKE…SQYS.

Belongs to the WD repeat TRM82 family. Forms a heterodimer with the catalytic subunit TRM8.

It is found in the nucleus. It participates in tRNA modification; N(7)-methylguanine-tRNA biosynthesis. Its function is as follows. Required for the formation of N(7)-methylguanine at position 46 (m7G46) in tRNA. In the complex, it is required to stabilize and induce conformational changes of the catalytic subunit. This is tRNA (guanine-N(7)-)-methyltransferase non-catalytic subunit TRM82 from Candida glabrata (strain ATCC 2001 / BCRC 20586 / JCM 3761 / NBRC 0622 / NRRL Y-65 / CBS 138) (Yeast).